We begin with the raw amino-acid sequence, 50 residues long: Large ribosomal subunit protein bL36B (50 aa).

This sequence belongs to the bacterial ribosomal protein bL36 family.

The sequence is that of Large ribosomal subunit protein bL36B from Pseudomonas aeruginosa (strain UCBPP-PA14).